We begin with the raw amino-acid sequence, 397 residues long: 2-isopropylmalate synthase 1 (397 aa).

The 263-residue stretch at 6–268 (VIVFDTTLRD…VHGINTKEIY (263 aa)) folds into the Pyruvate carboxyltransferase domain. Mn(2+)-binding residues include aspartate 15, histidine 203, histidine 205, and asparagine 239.

The protein belongs to the alpha-IPM synthase/homocitrate synthase family. LeuA type 1 subfamily. Homodimer. Mn(2+) serves as cofactor.

It is found in the cytoplasm. It carries out the reaction 3-methyl-2-oxobutanoate + acetyl-CoA + H2O = (2S)-2-isopropylmalate + CoA + H(+). The protein operates within amino-acid biosynthesis; L-leucine biosynthesis; L-leucine from 3-methyl-2-oxobutanoate: step 1/4. In terms of biological role, catalyzes the condensation of the acetyl group of acetyl-CoA with 3-methyl-2-oxobutanoate (2-ketoisovalerate) to form 3-carboxy-3-hydroxy-4-methylpentanoate (2-isopropylmalate). This Caldanaerobacter subterraneus subsp. tengcongensis (strain DSM 15242 / JCM 11007 / NBRC 100824 / MB4) (Thermoanaerobacter tengcongensis) protein is 2-isopropylmalate synthase 1.